The chain runs to 98 residues: C-X-C motif chemokine 10 (98 aa).

A signal peptide spans 1–21; sequence MNQSAVLIFCLIFLTLNGTQG. R26 carries the citrulline modification. Disulfide bonds link C30–C57 and C32–C74.

This sequence belongs to the intercrine alpha (chemokine CxC) family. Monomer, dimer, and tetramer. Interacts with CXCR3 (via N-terminus).

The protein localises to the secreted. Its function is as follows. Pro-inflammatory cytokine that is involved in a wide variety of processes such as chemotaxis, differentiation, and activation of peripheral immune cells, regulation of cell growth, apoptosis and modulation of angiostatic effects. Plays thereby an important role during viral infections by stimulating the activation and migration of immune cells to the infected sites. Mechanistically, binding of CXCL10 to the CXCR3 receptor activates G protein-mediated signaling and results in downstream activation of phospholipase C-dependent pathway, an increase in intracellular calcium production and actin reorganization. In turn, recruitment of activated Th1 lymphocytes occurs at sites of inflammation. Activation of the CXCL10/CXCR3 axis also plays an important role in neurons in response to brain injury for activating microglia, the resident macrophage population of the central nervous system, and directing them to the lesion site. This recruitment is an essential element for neuronal reorganization. This chain is C-X-C motif chemokine 10 (CXCL10), found in Canis lupus familiaris (Dog).